The chain runs to 474 residues: JmjC domain-containing protein F (474 aa).

A disordered region spans residues 247-269 (KTKKQQQQQQTTTTTANNDNDNS). The span at 251–261 (QQQQQQTTTTT) shows a compositional bias: low complexity. Residues 305–474 (AYLAQHGLIE…LSLSFWFIKK (170 aa)) enclose the JmjC domain.

This is JmjC domain-containing protein F (jcdF) from Dictyostelium discoideum (Social amoeba).